A 159-amino-acid chain; its full sequence is Succinate dehydrogenase [ubiquinone] cytochrome b small subunit, mitochondrial (159 aa).

The N-terminal 56 residues, 1–56, are a transit peptide targeting the mitochondrion; that stretch reads MAVLLKLGVLCSGQGARALSLRSRAVRPAFVSAFLQDQPTPGWRGTQHIHLSPSHQ. The Mitochondrial matrix portion of the chain corresponds to 57–63; the sequence is SGSKAAS. A helical membrane pass occupies residues 64–85; it reads LHWTSERVVSVLLLGLIPAGYL. Residues 86-90 are Mitochondrial intermembrane-facing; the sequence is NPCSV. Residues 91–111 form a helical membrane-spanning segment; that stretch reads VDYSLAAALTLHSHWGIGQVV. A heme b-binding site is contributed by His102. Residues 112–120 lie on the Mitochondrial matrix side of the membrane; that stretch reads TDYVHGDAL. Residue Tyr114 participates in a ubiquinone binding. The chain crosses the membrane as a helical span at residues 121 to 142; sequence QKATKAGLLAVSALTFAGLCYF. Residues 143-159 lie on the Mitochondrial intermembrane side of the membrane; sequence NYHDVGICRAVAMLWKL.

This sequence belongs to the CybS family. Component of complex II composed of four subunits: the flavoprotein (FP) SDHA, iron-sulfur protein (IP) SDHB, and a cytochrome b560 composed of SDHC and SDHD.

It is found in the mitochondrion inner membrane. It functions in the pathway carbohydrate metabolism; tricarboxylic acid cycle. Functionally, membrane-anchoring subunit of succinate dehydrogenase (SDH) that is involved in complex II of the mitochondrial electron transport chain and is responsible for transferring electrons from succinate to ubiquinone (coenzyme Q). SDH also oxidizes malate to the non-canonical enol form of oxaloacetate, enol-oxaloacetate. Enol-oxaloacetate, which is a potent inhibitor of the succinate dehydrogenase activity, is further isomerized into keto-oxaloacetate. The chain is Succinate dehydrogenase [ubiquinone] cytochrome b small subunit, mitochondrial (Sdhd) from Rattus norvegicus (Rat).